A 211-amino-acid chain; its full sequence is Orotate phosphoribosyltransferase (211 aa).

K26 is a binding site for 5-phospho-alpha-D-ribose 1-diphosphate. Residue 34–35 (FF) coordinates orotate. 5-phospho-alpha-D-ribose 1-diphosphate contacts are provided by residues 72 to 73 (YK), R98, K99, K102, H104, and 123 to 131 (DDVITAGTA). Residues T127 and R155 each contribute to the orotate site.

The protein belongs to the purine/pyrimidine phosphoribosyltransferase family. PyrE subfamily. As to quaternary structure, homodimer. The cofactor is Mg(2+).

The enzyme catalyses orotidine 5'-phosphate + diphosphate = orotate + 5-phospho-alpha-D-ribose 1-diphosphate. Its pathway is pyrimidine metabolism; UMP biosynthesis via de novo pathway; UMP from orotate: step 1/2. Its function is as follows. Catalyzes the transfer of a ribosyl phosphate group from 5-phosphoribose 1-diphosphate to orotate, leading to the formation of orotidine monophosphate (OMP). The sequence is that of Orotate phosphoribosyltransferase from Legionella pneumophila (strain Lens).